Consider the following 189-residue polypeptide: Ornithine decarboxylase antizyme 2 (189 aa).

Ser-186 carries the phosphoserine modification.

The protein belongs to the ODC antizyme family. Interacts with ODC1 and thereby sterically blocks ODC homodimerization. Interacts with AZIN2; this interaction disrupts the interaction between the antizyme and ODC1.

The protein resides in the nucleus. Functionally, ornithine decarboxylase (ODC) antizyme protein that negatively regulates ODC activity and intracellular polyamine biosynthesis and uptake in response to increased intracellular polyamine levels. Binds to ODC monomers, inhibiting the assembly of the functional ODC homodimers. Does not target the ODC monomers for degradation, which allows a protein synthesis-independent restoration of ODC activity. Involved in the translocation of AZIN2 from ER-Golgi intermediate compartment (ERGIC) to the cytosol. This Homo sapiens (Human) protein is Ornithine decarboxylase antizyme 2 (OAZ2).